Consider the following 280-residue polypeptide: Tryptophan synthase alpha chain (280 aa).

Residues E49 and D60 each act as proton acceptor in the active site.

The protein belongs to the TrpA family. Tetramer of two alpha and two beta chains.

The catalysed reaction is (1S,2R)-1-C-(indol-3-yl)glycerol 3-phosphate + L-serine = D-glyceraldehyde 3-phosphate + L-tryptophan + H2O. It participates in amino-acid biosynthesis; L-tryptophan biosynthesis; L-tryptophan from chorismate: step 5/5. In terms of biological role, the alpha subunit is responsible for the aldol cleavage of indoleglycerol phosphate to indole and glyceraldehyde 3-phosphate. In Corynebacterium glutamicum (strain ATCC 13032 / DSM 20300 / JCM 1318 / BCRC 11384 / CCUG 27702 / LMG 3730 / NBRC 12168 / NCIMB 10025 / NRRL B-2784 / 534), this protein is Tryptophan synthase alpha chain.